The sequence spans 620 residues: uncharacterized protein (620 aa).

A Radical SAM core domain is found at 324–586 (RRYVTIAIIK…HPWEKGIYPT (263 aa)). Cysteine 338, cysteine 342, and cysteine 345 together coordinate [4Fe-4S] cluster. An N6-(pyridoxal phosphate)lysine modification is found at lysine 552.

The protein belongs to the radical SAM superfamily. KamA family. The cofactor is [4Fe-4S] cluster. Requires pyridoxal 5'-phosphate as cofactor.

This is an uncharacterized protein from Methanocaldococcus jannaschii (strain ATCC 43067 / DSM 2661 / JAL-1 / JCM 10045 / NBRC 100440) (Methanococcus jannaschii).